Consider the following 262-residue polypeptide: Hydroxyethylthiazole kinase (262 aa).

Residue M50 coordinates substrate. 2 residues coordinate ATP: R125 and T171. G198 is a binding site for substrate.

This sequence belongs to the Thz kinase family. It depends on Mg(2+) as a cofactor.

The catalysed reaction is 5-(2-hydroxyethyl)-4-methylthiazole + ATP = 4-methyl-5-(2-phosphooxyethyl)-thiazole + ADP + H(+). Its pathway is cofactor biosynthesis; thiamine diphosphate biosynthesis; 4-methyl-5-(2-phosphoethyl)-thiazole from 5-(2-hydroxyethyl)-4-methylthiazole: step 1/1. In terms of biological role, catalyzes the phosphorylation of the hydroxyl group of 4-methyl-5-beta-hydroxyethylthiazole (THZ). This Escherichia coli O157:H7 protein is Hydroxyethylthiazole kinase.